Here is a 530-residue protein sequence, read N- to C-terminus: Tegument protein UL21 homolog (530 aa).

The protein belongs to the alphaherpesvirinae UL21 protein family. In terms of assembly, interacts (via C-terminus) with UL16.

The protein resides in the virion tegument. It localises to the host cytoplasm. Its subcellular location is the host nucleus. May participate in DNA packaging/capsid maturation events. Promotes efficient incorporation of tegument proteins UL46, UL49, and US3 homologs into virions. May also play a role in capsid transport to the trans-Golgi network (TGN). The sequence is that of Tegument protein UL21 homolog from Equus caballus (Horse).